The sequence spans 139 residues: ATP synthase epsilon chain (139 aa).

This sequence belongs to the ATPase epsilon chain family. F-type ATPases have 2 components, CF(1) - the catalytic core - and CF(0) - the membrane proton channel. CF(1) has five subunits: alpha(3), beta(3), gamma(1), delta(1), epsilon(1). CF(0) has three main subunits: a, b and c.

It localises to the cell inner membrane. Its function is as follows. Produces ATP from ADP in the presence of a proton gradient across the membrane. This chain is ATP synthase epsilon chain, found in Acinetobacter baumannii (strain AB307-0294).